Consider the following 120-residue polypeptide: Dihydroneopterin aldolase (120 aa).

Positions 20 and 114 each coordinate substrate.

Belongs to the archaeal dihydroneopterin aldolase family. As to quaternary structure, homotetramer.

The catalysed reaction is 7,8-dihydroneopterin = 6-hydroxymethyl-7,8-dihydropterin + glycolaldehyde. Its function is as follows. Catalyzes the conversion of 7,8-dihydroneopterin (H2Neo) to 6-hydroxymethyl-7,8-dihydropterin (6-HMD). This chain is Dihydroneopterin aldolase, found in Picrophilus torridus (strain ATCC 700027 / DSM 9790 / JCM 10055 / NBRC 100828 / KAW 2/3).